The primary structure comprises 82 residues: MNALVGCTTSFDPGWEVDAFGAVSNLCQPMEADLYGCADPCWWPAQVADTLNTYPNWSAGADDVMQDWRKLQSVFPETKGSS.

The 4-cysteinyl-glutamic acid (Cys-Glu) cross-link spans 7–16; the sequence is CTTSFDPGWE. Cross-links (3-cysteinyl-aspartic acid (Cys-Asp)) lie at residues 27–33 and 41–49; these read CQPMEAD and CWWPAQVAD. Residue aspartate 33 is the Proton acceptor of the active site. A cross-link (4'-cysteinyl-tryptophylquinone (Cys-Trp)) is located at residues 37-43; it reads CADPCWW. The residue at position 43 (tryptophan 43) is a Tryptophylquinone.

This sequence belongs to the quinohemoprotein amine dehydrogenase subunit gamma family. As to quaternary structure, heterotrimer of an alpha, a beta and a gamma subunit. Cysteine tryptophylquinone residue serves as cofactor. In terms of processing, the cysteine tryptophylquinone (CTQ) is generated by oxidation of the indole ring of a tryptophan residue to form tryptophylquinone, followed by covalent cross-linking with a cysteine residue.

It is found in the periplasm. The catalysed reaction is 2 Fe(III)-[cytochrome c550] + an aliphatic amine + H2O = 2 Fe(II)-[cytochrome c550] + an aldehyde + NH4(+) + 2 H(+). With respect to regulation, inhibited by carbonyl reagents such as hydrazine, hydroxylamine, phenylhydrazine and semicarbazide. Its function is as follows. Catalyzes the oxidative deamination of a wide range of primary aliphatic and aromatic amines. The physiological electron acceptor is the constitutive cytochrome c550. This chain is Quinohemoprotein amine dehydrogenase subunit gamma (qhnDH), found in Paracoccus denitrificans.